Consider the following 28-residue polypeptide: Dermaseptin-2.2TR (28 aa).

Expressed by the skin glands.

The protein resides in the secreted. Functionally, has antimicrobial activity. In Phyllomedusa trinitatis (Trinidad leaf frog), this protein is Dermaseptin-2.2TR.